A 452-amino-acid polypeptide reads, in one-letter code: Eukaryotic translation initiation factor 4B3 (452 aa).

A2 is modified (N-acetylalanine). The disordered stretch occupies residues 20–282 (EEHEAELKQQ…PSGGSRPRLV (263 aa)). The span at 28–37 (QQPSPTNQKS) shows a compositional bias: polar residues. A compositionally biased stretch (basic and acidic residues) spans 98 to 110 (PRERSAEELDRSK). Residues 111–122 (LGGGFRSYGGGR) show a composition bias toward gly residues. A compositionally biased stretch (low complexity) spans 126 to 136 (ESSSSRWGSSR). Basic and acidic residues predominate over residues 137 to 156 (VSEDGERRGGGFNRDREPSR). 2 short sequence motifs (nuclear localization signal) span residues 172–179 (AKKPISGN) and 215–222 (PRRFVSSN). Positions 227 to 243 (DRFEKRGSFESLSRNRD) are enriched in basic and acidic residues. S234, S270, and S300 each carry phosphoserine. Positions 265-280 (GAANGSPPPSGGSRPR) are enriched in low complexity. The tract at residues 349 to 452 (AAMEKPNEKS…AKKEETEDKI (104 aa)) is disordered. Over residues 369 to 386 (GRKDEERIERSWRKSTEH) the composition is skewed to basic and acidic residues. Residues 387–397 (SEEDAQEEEPA) are compositionally biased toward acidic residues. Composition is skewed to basic and acidic residues over residues 400 to 419 (GAKK…KKEE) and 441 to 452 (EEAKKEETEDKI).

This sequence belongs to the eIF-4 subunit B family. In terms of assembly, homodimer. Nonspherical monomer. mRNA-discriminating component of initiation complexes. Interacts with MAD2. Phosphorylated.

The protein localises to the nucleus. In terms of biological role, promotes the eIF4F and eIF4A RNA-dependent ATP-hydrolysis activity with different efficiency depending on mRNAs, thus providing mRNA discrimination during initiation of translation. The protein is Eukaryotic translation initiation factor 4B3 of Arabidopsis thaliana (Mouse-ear cress).